A 295-amino-acid polypeptide reads, in one-letter code: Elongation factor Ts (295 aa).

The interval 80-83 (TDFV) is involved in Mg(2+) ion dislocation from EF-Tu.

Belongs to the EF-Ts family.

Its subcellular location is the cytoplasm. Associates with the EF-Tu.GDP complex and induces the exchange of GDP to GTP. It remains bound to the aminoacyl-tRNA.EF-Tu.GTP complex up to the GTP hydrolysis stage on the ribosome. The polypeptide is Elongation factor Ts (Lysinibacillus sphaericus (strain C3-41)).